The sequence spans 324 residues: 4-hydroxy-3-methylbut-2-enyl diphosphate reductase (324 aa).

[4Fe-4S] cluster is bound at residue Cys-13. (2E)-4-hydroxy-3-methylbut-2-enyl diphosphate-binding residues include His-41 and His-75. Dimethylallyl diphosphate-binding residues include His-41 and His-75. Residues His-41 and His-75 each coordinate isopentenyl diphosphate. Cys-97 serves as a coordination point for [4Fe-4S] cluster. (2E)-4-hydroxy-3-methylbut-2-enyl diphosphate is bound at residue His-125. His-125 provides a ligand contact to dimethylallyl diphosphate. His-125 serves as a coordination point for isopentenyl diphosphate. Catalysis depends on Glu-127, which acts as the Proton donor. Thr-168 is a binding site for (2E)-4-hydroxy-3-methylbut-2-enyl diphosphate. Residue Cys-225 participates in [4Fe-4S] cluster binding. Ser-253, Ser-254, Asn-255, and Ser-302 together coordinate (2E)-4-hydroxy-3-methylbut-2-enyl diphosphate. The dimethylallyl diphosphate site is built by Ser-253, Ser-254, Asn-255, and Ser-302. Positions 253, 254, 255, and 302 each coordinate isopentenyl diphosphate.

The protein belongs to the IspH family. Requires [4Fe-4S] cluster as cofactor.

It carries out the reaction isopentenyl diphosphate + 2 oxidized [2Fe-2S]-[ferredoxin] + H2O = (2E)-4-hydroxy-3-methylbut-2-enyl diphosphate + 2 reduced [2Fe-2S]-[ferredoxin] + 2 H(+). The catalysed reaction is dimethylallyl diphosphate + 2 oxidized [2Fe-2S]-[ferredoxin] + H2O = (2E)-4-hydroxy-3-methylbut-2-enyl diphosphate + 2 reduced [2Fe-2S]-[ferredoxin] + 2 H(+). It participates in isoprenoid biosynthesis; dimethylallyl diphosphate biosynthesis; dimethylallyl diphosphate from (2E)-4-hydroxy-3-methylbutenyl diphosphate: step 1/1. The protein operates within isoprenoid biosynthesis; isopentenyl diphosphate biosynthesis via DXP pathway; isopentenyl diphosphate from 1-deoxy-D-xylulose 5-phosphate: step 6/6. Catalyzes the conversion of 1-hydroxy-2-methyl-2-(E)-butenyl 4-diphosphate (HMBPP) into a mixture of isopentenyl diphosphate (IPP) and dimethylallyl diphosphate (DMAPP). Acts in the terminal step of the DOXP/MEP pathway for isoprenoid precursor biosynthesis. This is 4-hydroxy-3-methylbut-2-enyl diphosphate reductase from Chlorobium limicola (strain DSM 245 / NBRC 103803 / 6330).